The primary structure comprises 279 residues: NADPH-dependent 7-cyano-7-deazaguanine reductase (279 aa).

86 to 88 (IES) is a binding site for substrate. Residue 88-89 (SK) coordinates NADPH. The active-site Thioimide intermediate is the Cys-187. Asp-194 functions as the Proton donor in the catalytic mechanism. 226 to 227 (HE) serves as a coordination point for substrate. 255–256 (RG) is an NADPH binding site.

It belongs to the GTP cyclohydrolase I family. QueF type 2 subfamily. As to quaternary structure, homodimer.

The protein localises to the cytoplasm. The catalysed reaction is 7-aminomethyl-7-carbaguanine + 2 NADP(+) = 7-cyano-7-deazaguanine + 2 NADPH + 3 H(+). Its pathway is tRNA modification; tRNA-queuosine biosynthesis. Catalyzes the NADPH-dependent reduction of 7-cyano-7-deazaguanine (preQ0) to 7-aminomethyl-7-deazaguanine (preQ1). This chain is NADPH-dependent 7-cyano-7-deazaguanine reductase, found in Haemophilus influenzae (strain ATCC 51907 / DSM 11121 / KW20 / Rd).